The chain runs to 134 residues: Peroxisomal testis-specific protein 1 (134 aa).

Positions 131-134 match the Microbody targeting signal motif; the sequence is NHLL.

It is found in the peroxisome. The sequence is that of Peroxisomal testis-specific protein 1 (PXT1) from Homo sapiens (Human).